Consider the following 570-residue polypeptide: Interleukin-1 receptor accessory protein (570 aa).

A signal peptide spans 1–20 (MTLLWCVVSLYFYGILQSDA). 3 Ig-like C2-type domains span residues 21-128 (SERC…VAFP), 141-230 (PMKL…RTLT), and 242-348 (PPVI…AKVK). At 21 to 367 (SERCDDWGLD…VELACGFGAT (347 aa)) the chain is on the extracellular side. 5 disulfides stabilise this stretch: Cys-24–Cys-122, Cys-47–Cys-114, Cys-137–Cys-181, Cys-160–Cys-212, and Cys-266–Cys-332. An N-linked (GlcNAc...) asparagine glycan is attached at Asn-57. Residues 69–85 (IWYWTRQDRDLEEPINF) form an essential for interaction with PTPRD region. N-linked (GlcNAc...) asparagine glycans are attached at residues Asn-107, Asn-111, and Asn-118. N-linked (GlcNAc...) asparagine glycans are attached at residues Asn-196, Asn-209, and Asn-299. Residues 368–388 (VLLVVILIVVYHVYWLEMVLF) traverse the membrane as a helical segment. The Cytoplasmic portion of the chain corresponds to 389-570 (YRAHFGTDET…GLSYSSLKNV (182 aa)). Positions 403–546 (KEYDIYVSYA…RFWKQLQVAM (144 aa)) constitute a TIR domain. The active site involves Glu-482. Residues 549–570 (KKSPRRSSSDEQGLSYSSLKNV) are disordered. Position 557 is a phosphoserine (Ser-557). Residues 558–570 (DEQGLSYSSLKNV) show a composition bias toward polar residues.

Belongs to the interleukin-1 receptor family. In terms of assembly, the interleukin-36 receptor complex is a heterodimer of IL1RL2 and IL1RAP; the association is inhibited by IL36RN. The interleukin-1 receptor complex is a heterodimer of IL1R1 and IL1RAP. Associates with IL1R2 to form a non-signaling interleukin-1 receptor complex. Isoform 4 interacts with IL1R1 in an interleukin-1-dependent manner. Interacts with IL-33-bound IL1RL1 to form the minimal interleukin-33 signaling complex with a 1:1:1 stoichiometry. Interacts with KIT (independently of stimulation with KITLG/SCF). A mast cell-specific KITLG/SCF-induced interleukin-33 signaling complex contains IL1RL1, IL1RAP, KIT and MYD88. Interacts (via the first immunoglobilin domain) with PTPRD (via the third immunoglobilin domain); induces pre- and postsynaptic differentiation of neurons. In terms of tissue distribution, detected in liver, skin, placenta, thymus and lung. Isoform 4 is predominantly expressed in brain. Overexpressed on candidate chronic myeloid leukemia (CML) stem cells, hematopoietic stem cells and mononuclear cells of patients with acute myeloid leukemia (AML). Overexpressed in patients with chronic obstructive pulmonary disease (COPD). Expressed in T-helper 1 (Th1) and T-helper 2 (Th2) cell subsets.

It is found in the cell membrane. The protein resides in the secreted. It catalyses the reaction NAD(+) + H2O = ADP-D-ribose + nicotinamide + H(+). In terms of biological role, coreceptor for IL1RL2 in the IL-36 signaling system. Coreceptor with IL1R1 in the IL-1 signaling system. Associates with IL1R1 bound to IL1B to form the high affinity interleukin-1 receptor complex which mediates interleukin-1-dependent activation of NF-kappa-B and other pathways. Signaling involves the recruitment of adapter molecules such as TOLLIP, MYD88, and IRAK1 or IRAK2 via the respective TIR domains of the receptor/coreceptor subunits. Recruits TOLLIP to the signaling complex. Does not bind to interleukin-1 alone; binding of IL1RN to IL1R1, prevents its association with IL1R1 to form a signaling complex. The cellular response is modulated through a non-signaling association with the membrane IL1R2 decoy receptor. Coreceptor for IL1RL1 in the IL-33 signaling system. Can bidirectionally induce pre- and postsynaptic differentiation of neurons by trans-synaptically binding to PTPRD. May play a role in IL1B-mediated costimulation of IFNG production from T-helper 1 (Th1) cells. Associates with secreted ligand-bound IL1R2 and increases the affinity of secreted IL1R2 for IL1B; this complex formation may be the dominant mechanism for neutralization of IL1B by secreted/soluble receptors. Enhances the ability of secreted IL1R1 to inhibit IL-33 signaling. Its function is as follows. Unable to mediate canonical IL-1 signaling. Required for Src phosphorylation by IL1B. May be involved in IL1B-potentiated NMDA-induced calcium influx in neurons. The sequence is that of Interleukin-1 receptor accessory protein (IL1RAP) from Homo sapiens (Human).